The sequence spans 296 residues: MNLQTMIRTLQDYWSEQDCIMLQSYDVEKGAGTMSPYTFLKAIGPEPWKAGYVEPSRRPADGRYGENPNRLFQHHQFQVVMKPSPDNIQELYLGSLEKLGINPLEHDIRFVEDNWENPSLGCAGLGWEVWLDGMEITQFTYFQQVGGLECFPVTSEITYGVERLASYIQDKENVFDLEWTEGISYRDIFFQAEFENSKYAFETSNTDMLLTLFDTYEREAARQMQEGLVFPAYDYVLKCSHTFNLLDARGVVSVTERAQYIGRIRNLARRIAKTFYESREKLGFPLVKEEGGKRHE.

Belongs to the class-II aminoacyl-tRNA synthetase family. As to quaternary structure, tetramer of two alpha and two beta subunits.

It is found in the cytoplasm. The catalysed reaction is tRNA(Gly) + glycine + ATP = glycyl-tRNA(Gly) + AMP + diphosphate. This is Glycine--tRNA ligase alpha subunit from Listeria innocua serovar 6a (strain ATCC BAA-680 / CLIP 11262).